A 305-amino-acid chain; its full sequence is Serine/threonine-protein phosphatase 4 catalytic subunit (305 aa).

Residues Asp-52, His-54, Asp-80, and Asn-112 each contribute to the Mn(2+) site. Residue His-113 is the Proton donor of the active site. 2 residues coordinate Mn(2+): His-162 and His-236.

This sequence belongs to the PPP phosphatase family. PP-4 (PP-X) subfamily. As to quaternary structure, serine/threonine-protein phosphatase 4 (PP4) occurs in different assemblies of the catalytic and one or more regulatory subunits. Probably part of a PP4 complex containing ppp4c and ppp4r2. Interacts with smkA. It depends on Mn(2+) as a cofactor.

It localises to the cytoplasm. The protein resides in the nucleus. The enzyme catalyses O-phospho-L-seryl-[protein] + H2O = L-seryl-[protein] + phosphate. It catalyses the reaction O-phospho-L-threonyl-[protein] + H2O = L-threonyl-[protein] + phosphate. In terms of biological role, required for development, chemotaxis and the expression of numerous genes. The protein is Serine/threonine-protein phosphatase 4 catalytic subunit (ppp4c) of Dictyostelium discoideum (Social amoeba).